Reading from the N-terminus, the 982-residue chain is MADRSARRARPGDDSVGQFVIGAEIGKGSFAQVYMGKHKVSGAAVAIKSVELARLNKKLKENLYGEINILKTLRHPHIVALHDCVESATHINLMMEYCELGDLSLFIKKREKLSTNPATHDMARKYPNVPNSGLNEVVIRHFLKQLSSALKFLRESNLVHRDVKPQNLLLLPSPEFREVNKLARPILTASQDSLVPVAGLASLPMLKLADFGFARVLPSTSLAETLCGSPLYMAPEILRYERYDAKADLWSVGTVLFEMIVGRPPFRASNHVELLRKIEAAEDVIKFPRETTISSEMKGLTRALLKRNPVERISFENFFAHPVIISSIPGLVEDDIPKPEASEQRSSSKDTRAASKSDDPIASPRKYSFRRHPTDNDQIRDQFRRVEPPSSAAESAPSRQTSAFSGIAAEARKQAAAEASARTGQSSRNEPGDNLVPRRPQAQPSTSAPSKPGLYEERRRGISNASLNRSNRESSSPTSAALANDSARAPPQQTSRRVQAEEREKAAQDVAFERDYVVVEKKHVEVNAFADEMAANPRLGGQGTPLSPKSGQIVRRATQQGNPTSTTGAIPAAPSRTMQIAQGTQRHYHERGTSLSASPGSTASFITKAIQDASLRLLGIKYPAGLTKGASPPELYNPYPAYPTPSPPVGLISSGKQSTPVDEDARVAQLIEEHATRSDVVYGFAEVKYKQLVPLAPSAEHGLGGTTLEDMPTGEEDVLTVEAIVSLSEEALVLYVKALTLLAKSMDIASLWWARKNRGDQANNALSSTRDSVNTQTLSLRINSAVQWVRSRFNEVLEKAEVVRLRLMDAQKRLPDDHPSHPSNHPQGSESVNGASAEGVFLTVGVTAEKLMYDRALEMSRTAAINEITNEDLAGCEISYVTAIRMLEAVLDNDEDAPKRRLSANMDDSGGDGEDGHAEINADDQQAVQKMIHMIRSRLTSVRSKVRMISNASKAQQQSQPQSLIRRRSGDVTPRSVPSYSS.

Residues 19–324 form the Protein kinase domain; sequence FVIGAEIGKG…FENFFAHPVI (306 aa). ATP contacts are provided by residues 25–33 and K48; that span reads IGKGSFAQV. D162 acts as the Proton acceptor in catalysis. Disordered regions lie at residues 334–506, 813–834, 898–918, and 947–982; these read DDIP…REKA, RLPDDHPSHPSNHPQGSESVNG, PKRRLSANMDDSGGDGEDGHA, and RMISNASKAQQQSQPQSLIRRRSGDVTPRSVPSYSS. Basic and acidic residues-rich tracts occupy residues 335 to 359 and 372 to 387; these read DIPKPEASEQRSSSKDTRAASKSDD and HPTDNDQIRDQFRRVE. The segment covering 388-398 has biased composition (low complexity); the sequence is PPSSAAESAPS. The segment covering 463 to 481 has biased composition (polar residues); sequence SNASLNRSNRESSSPTSAA.

It belongs to the protein kinase superfamily. Ser/Thr protein kinase family. APG1/unc-51/ULK1 subfamily. As to quaternary structure, homodimer. Forms a ternary complex with ATG13 and ATG17. Uniformly detected in conidia, mycelia and appressoria (at protein level).

It localises to the cytoplasm. It is found in the preautophagosomal structure membrane. The enzyme catalyses L-seryl-[protein] + ATP = O-phospho-L-seryl-[protein] + ADP + H(+). It carries out the reaction L-threonyl-[protein] + ATP = O-phospho-L-threonyl-[protein] + ADP + H(+). Serine/threonine protein kinase involved in the cytoplasm to vacuole transport (Cvt) and found to be essential in autophagy, where it is required for the formation of autophagosomes. Involved in the clearance of protein aggregates which cannot be efficiently cleared by the proteasome. Required for selective autophagic degradation of the nucleus (nucleophagy) as well as for mitophagy which contributes to regulate mitochondrial quantity and quality by eliminating the mitochondria to a basal level to fulfill cellular energy requirements and preventing excess ROS production. Also involved in endoplasmic reticulum-specific autophagic process, in selective removal of ER-associated degradation (ERAD) substrates. Plays a key role in ATG9 and ATG23 cycling through the pre-autophagosomal structure and is necessary to promote ATG18 binding to ATG9 through phosphorylation of ATG9. Catalyzes phosphorylation of ATG4, decreasing the interaction between ATG4 and ATG8 and impairing deconjugation of PE-conjugated forms of ATG8. Autophagy is essential to fungal development, production of appressorium turgor, and pathogenicity in rice blast disease. In Pyricularia oryzae (strain 70-15 / ATCC MYA-4617 / FGSC 8958) (Rice blast fungus), this protein is Serine/threonine-protein kinase ATG1.